Consider the following 72-residue polypeptide: Large ribosomal subunit protein bL31 (72 aa).

Zn(2+) is bound by residues C17, C19, C37, and C40.

This sequence belongs to the bacterial ribosomal protein bL31 family. Type A subfamily. Part of the 50S ribosomal subunit. Zn(2+) serves as cofactor.

Functionally, binds the 23S rRNA. In Clostridium botulinum (strain Loch Maree / Type A3), this protein is Large ribosomal subunit protein bL31.